The following is a 694-amino-acid chain: Elongation factor G (694 aa).

One can recognise a tr-type G domain in the interval 6 to 288 (KLYRNIGIAA…GVIEYLPSPT (283 aa)). Residues 15–22 (AHVDAGKT), 86–90 (DTPGH), and 140–143 (NKMD) contribute to the GTP site.

This sequence belongs to the TRAFAC class translation factor GTPase superfamily. Classic translation factor GTPase family. EF-G/EF-2 subfamily.

Its subcellular location is the cytoplasm. Functionally, catalyzes the GTP-dependent ribosomal translocation step during translation elongation. During this step, the ribosome changes from the pre-translocational (PRE) to the post-translocational (POST) state as the newly formed A-site-bound peptidyl-tRNA and P-site-bound deacylated tRNA move to the P and E sites, respectively. Catalyzes the coordinated movement of the two tRNA molecules, the mRNA and conformational changes in the ribosome. The protein is Elongation factor G of Legionella pneumophila (strain Lens).